A 60-amino-acid chain; its full sequence is uncharacterized protein (60 aa).

This is an uncharacterized protein from Archaeoglobus fulgidus (strain ATCC 49558 / DSM 4304 / JCM 9628 / NBRC 100126 / VC-16).